The following is a 612-amino-acid chain: UvrABC system protein C (612 aa).

In terms of domain architecture, GIY-YIG spans 20-98; the sequence is THSGVYRMLD…IKQHRPKYNI (79 aa). The 36-residue stretch at 208-243 folds into the UVR domain; that stretch reads SSVLEEISAKMYQASEDMEYEKAQVYRDQLVILRKL.

The protein belongs to the UvrC family. In terms of assembly, interacts with UvrB in an incision complex.

The protein resides in the cytoplasm. Its function is as follows. The UvrABC repair system catalyzes the recognition and processing of DNA lesions. UvrC both incises the 5' and 3' sides of the lesion. The N-terminal half is responsible for the 3' incision and the C-terminal half is responsible for the 5' incision. The chain is UvrABC system protein C from Francisella philomiragia subsp. philomiragia (strain ATCC 25017 / CCUG 19701 / FSC 153 / O#319-036).